The primary structure comprises 198 residues: Pyridoxal 5'-phosphate synthase subunit PdxT (198 aa).

An L-glutamine-binding site is contributed by 49-51; it reads GES. Residue C81 is the Nucleophile of the active site. L-glutamine is bound by residues R113 and 141-142; that span reads IR. Active-site charge relay system residues include H177 and E179.

It belongs to the glutaminase PdxT/SNO family. As to quaternary structure, in the presence of PdxS, forms a dodecamer of heterodimers. Only shows activity in the heterodimer.

It catalyses the reaction aldehydo-D-ribose 5-phosphate + D-glyceraldehyde 3-phosphate + L-glutamine = pyridoxal 5'-phosphate + L-glutamate + phosphate + 3 H2O + H(+). It carries out the reaction L-glutamine + H2O = L-glutamate + NH4(+). It functions in the pathway cofactor biosynthesis; pyridoxal 5'-phosphate biosynthesis. Catalyzes the hydrolysis of glutamine to glutamate and ammonia as part of the biosynthesis of pyridoxal 5'-phosphate. The resulting ammonia molecule is channeled to the active site of PdxS. This Mycobacterium leprae (strain TN) protein is Pyridoxal 5'-phosphate synthase subunit PdxT.